We begin with the raw amino-acid sequence, 369 residues long: Phenylalanine--tRNA ligase alpha subunit (369 aa).

E272 contacts Mg(2+).

Belongs to the class-II aminoacyl-tRNA synthetase family. Phe-tRNA synthetase alpha subunit type 1 subfamily. Tetramer of two alpha and two beta subunits. Requires Mg(2+) as cofactor.

It is found in the cytoplasm. It carries out the reaction tRNA(Phe) + L-phenylalanine + ATP = L-phenylalanyl-tRNA(Phe) + AMP + diphosphate + H(+). This chain is Phenylalanine--tRNA ligase alpha subunit, found in Cutibacterium acnes (strain DSM 16379 / KPA171202) (Propionibacterium acnes).